We begin with the raw amino-acid sequence, 495 residues long: Phosphomethylpyrimidine synthase (495 aa).

Residues Asn-125, Met-154, Tyr-183, His-219, 239–241 (SRG), 280–283 (DGLR), and Glu-319 each bind substrate. His-323 is a Zn(2+) binding site. Substrate is bound at residue Tyr-346. His-387 contributes to the Zn(2+) binding site. [4Fe-4S] cluster contacts are provided by Cys-467, Cys-470, and Cys-475.

The protein belongs to the ThiC family. The cofactor is [4Fe-4S] cluster.

It catalyses the reaction 5-amino-1-(5-phospho-beta-D-ribosyl)imidazole + S-adenosyl-L-methionine = 4-amino-2-methyl-5-(phosphooxymethyl)pyrimidine + CO + 5'-deoxyadenosine + formate + L-methionine + 3 H(+). Its pathway is cofactor biosynthesis; thiamine diphosphate biosynthesis. Its function is as follows. Catalyzes the synthesis of the hydroxymethylpyrimidine phosphate (HMP-P) moiety of thiamine from aminoimidazole ribotide (AIR) in a radical S-adenosyl-L-methionine (SAM)-dependent reaction. This chain is Phosphomethylpyrimidine synthase, found in Leptospira interrogans serogroup Icterohaemorrhagiae serovar Lai (strain 56601).